We begin with the raw amino-acid sequence, 477 residues long: ATP synthase subunit beta (477 aa).

Position 151–158 (151–158) interacts with ATP; it reads GGAGVGKT.

Belongs to the ATPase alpha/beta chains family. In terms of assembly, F-type ATPases have 2 components, CF(1) - the catalytic core - and CF(0) - the membrane proton channel. CF(1) has five subunits: alpha(3), beta(3), gamma(1), delta(1), epsilon(1). CF(0) has three main subunits: a(1), b(2) and c(9-12). The alpha and beta chains form an alternating ring which encloses part of the gamma chain. CF(1) is attached to CF(0) by a central stalk formed by the gamma and epsilon chains, while a peripheral stalk is formed by the delta and b chains.

Its subcellular location is the cell inner membrane. It catalyses the reaction ATP + H2O + 4 H(+)(in) = ADP + phosphate + 5 H(+)(out). Functionally, produces ATP from ADP in the presence of a proton gradient across the membrane. The catalytic sites are hosted primarily by the beta subunits. The protein is ATP synthase subunit beta of Bradyrhizobium diazoefficiens (strain JCM 10833 / BCRC 13528 / IAM 13628 / NBRC 14792 / USDA 110).